A 363-amino-acid chain; its full sequence is Phosphoserine aminotransferase (363 aa).

L-glutamate is bound at residue arginine 42. Pyridoxal 5'-phosphate contacts are provided by residues 76 to 77 (GR), tryptophan 102, threonine 156, aspartate 175, and glutamine 198. At lysine 199 the chain carries N6-(pyridoxal phosphate)lysine. Residue 240-241 (NT) participates in pyridoxal 5'-phosphate binding.

The protein belongs to the class-V pyridoxal-phosphate-dependent aminotransferase family. SerC subfamily. Homodimer. Pyridoxal 5'-phosphate serves as cofactor.

The protein localises to the cytoplasm. The catalysed reaction is O-phospho-L-serine + 2-oxoglutarate = 3-phosphooxypyruvate + L-glutamate. It catalyses the reaction 4-(phosphooxy)-L-threonine + 2-oxoglutarate = (R)-3-hydroxy-2-oxo-4-phosphooxybutanoate + L-glutamate. The protein operates within amino-acid biosynthesis; L-serine biosynthesis; L-serine from 3-phospho-D-glycerate: step 2/3. Its pathway is cofactor biosynthesis; pyridoxine 5'-phosphate biosynthesis; pyridoxine 5'-phosphate from D-erythrose 4-phosphate: step 3/5. Functionally, catalyzes the reversible conversion of 3-phosphohydroxypyruvate to phosphoserine and of 3-hydroxy-2-oxo-4-phosphonooxybutanoate to phosphohydroxythreonine. The chain is Phosphoserine aminotransferase from Shewanella sp. (strain MR-7).